Here is a 257-residue protein sequence, read N- to C-terminus: NH(3)-dependent NAD(+) synthetase (257 aa).

28 to 35 (GISGGVDS) provides a ligand contact to ATP. Asp-34 contributes to the Mg(2+) binding site. Arg-109 lines the deamido-NAD(+) pocket. Thr-129 serves as a coordination point for ATP. Glu-134 contacts Mg(2+). Residues Lys-142 and Asp-149 each contribute to the deamido-NAD(+) site. ATP is bound by residues Lys-158 and Ser-180. 240 to 241 (HK) contributes to the deamido-NAD(+) binding site.

It belongs to the NAD synthetase family. As to quaternary structure, homodimer.

The catalysed reaction is deamido-NAD(+) + NH4(+) + ATP = AMP + diphosphate + NAD(+) + H(+). It participates in cofactor biosynthesis; NAD(+) biosynthesis; NAD(+) from deamido-NAD(+) (ammonia route): step 1/1. Catalyzes the ATP-dependent amidation of deamido-NAD to form NAD. Uses ammonia as a nitrogen source. This is NH(3)-dependent NAD(+) synthetase from Pyrococcus furiosus (strain ATCC 43587 / DSM 3638 / JCM 8422 / Vc1).